A 339-amino-acid chain; its full sequence is Anthranilate phosphoribosyltransferase (339 aa).

5-phospho-alpha-D-ribose 1-diphosphate-binding positions include Gly80, 83–84 (GD), Thr88, 90–93 (NIST), 108–116 (KHGNRSVSS), and Ser120. Anthranilate is bound at residue Gly80. A Mg(2+)-binding site is contributed by Ser92. Asn111 provides a ligand contact to anthranilate. Residue Arg166 coordinates anthranilate. The Mg(2+) site is built by Asp225 and Glu226.

This sequence belongs to the anthranilate phosphoribosyltransferase family. As to quaternary structure, homodimer. Mg(2+) serves as cofactor.

The enzyme catalyses N-(5-phospho-beta-D-ribosyl)anthranilate + diphosphate = 5-phospho-alpha-D-ribose 1-diphosphate + anthranilate. Its pathway is amino-acid biosynthesis; L-tryptophan biosynthesis; L-tryptophan from chorismate: step 2/5. Functionally, catalyzes the transfer of the phosphoribosyl group of 5-phosphorylribose-1-pyrophosphate (PRPP) to anthranilate to yield N-(5'-phosphoribosyl)-anthranilate (PRA). This is Anthranilate phosphoribosyltransferase from Desulfosudis oleivorans (strain DSM 6200 / JCM 39069 / Hxd3) (Desulfococcus oleovorans).